A 31-amino-acid chain; its full sequence is Cytochrome b6-f complex subunit 6 (31 aa).

Residues 4–24 form a helical membrane-spanning segment; that stretch reads ITSFFGFLLAALTITSVLFIG.

It belongs to the PetL family. As to quaternary structure, the 4 large subunits of the cytochrome b6-f complex are cytochrome b6, subunit IV (17 kDa polypeptide, PetD), cytochrome f and the Rieske protein, while the 4 small subunits are PetG, PetL, PetM and PetN. The complex functions as a dimer.

It localises to the plastid. The protein localises to the chloroplast thylakoid membrane. In terms of biological role, component of the cytochrome b6-f complex, which mediates electron transfer between photosystem II (PSII) and photosystem I (PSI), cyclic electron flow around PSI, and state transitions. PetL is important for photoautotrophic growth as well as for electron transfer efficiency and stability of the cytochrome b6-f complex. The chain is Cytochrome b6-f complex subunit 6 from Oenothera elata subsp. hookeri (Hooker's evening primrose).